The primary structure comprises 523 residues: Tyrosine ammonia-lyase (523 aa).

The active-site Proton donor/acceptor is tyrosine 60. Histidine 89 serves as a coordination point for substrate. The 5-imidazolinone (Ala-Gly) cross-link spans 149 to 151 (ASG). Position 150 is a 2,3-didehydroalanine (Ser) (serine 150). Substrate-binding positions include arginine 303 and 432–436 (NAANQ).

Belongs to the PAL/histidase family. Homotetramer. Post-translationally, contains an active site 4-methylidene-imidazol-5-one (MIO), which is formed autocatalytically by cyclization and dehydration of residues Ala-Ser-Gly.

It carries out the reaction L-tyrosine = (E)-4-coumarate + NH4(+). In terms of biological role, catalyzes the non-oxidative deamination of L-tyrosine. Has very low phenylalanine ammonia-lyase activity (in vitro). This is Tyrosine ammonia-lyase (hutH) from Cereibacter sphaeroides (strain ATCC 17023 / DSM 158 / JCM 6121 / CCUG 31486 / LMG 2827 / NBRC 12203 / NCIMB 8253 / ATH 2.4.1.) (Rhodobacter sphaeroides).